The following is a 105-amino-acid chain: Large ribosomal subunit protein uL24 (105 aa).

It belongs to the universal ribosomal protein uL24 family. In terms of assembly, part of the 50S ribosomal subunit.

Functionally, one of two assembly initiator proteins, it binds directly to the 5'-end of the 23S rRNA, where it nucleates assembly of the 50S subunit. One of the proteins that surrounds the polypeptide exit tunnel on the outside of the subunit. The protein is Large ribosomal subunit protein uL24 of Parvibaculum lavamentivorans (strain DS-1 / DSM 13023 / NCIMB 13966).